The sequence spans 364 residues: Zinc transporter 3 (364 aa).

Residues 1-23 form the signal peptide; sequence MGAKKHTLQVLPWLLLFAQHTAA. Over 24–44 the chain is Extracellular; the sequence is SACDCANTTDGADRQGAMKLK. N-linked (GlcNAc...) asparagine glycosylation occurs at Asn30. A helical transmembrane segment spans residues 45-65; sequence LIAIASILAAGAAGVLVPVIG. The Cytoplasmic portion of the chain corresponds to 66-76; that stretch reads RSMAALRPDGD. Residues 77–97 form a helical membrane-spanning segment; sequence IFFAVKAFAAGVILATGMVHI. At 98-119 the chain is on the extracellular side; the sequence is LPAAFDALTSPCLKRGGGDRNP. The helical transmembrane segment at 120–140 threads the bilayer; sequence FPFAGLVSMSAAVSTMVVDSL. At 141-213 the chain is on the cytoplasmic side; that stretch reads AAGYYHRSQF…ESIRHKVVSQ (73 aa). A helical transmembrane segment spans residues 214–234; sequence VLELGILVHSVIIGVSLGASV. Residues 235-241 lie on the Extracellular side of the membrane; sequence RPSTIRP. A helical membrane pass occupies residues 242–262; that stretch reads LVGALSFHQFFEGVGLGGCIV. Residues 263 to 271 are Cytoplasmic-facing; it reads QANFKVRAT. The helical transmembrane segment at 272 to 292 threads the bilayer; that stretch reads VIMAIFFSLTAPVGIVLGIAI. Residues 293–303 are Extracellular-facing; the sequence is SSSYNVHSSTA. A helical transmembrane segment spans residues 304 to 324; the sequence is FVVEGVFNSASAGILIYMSLV. Residues 325-343 lie on the Cytoplasmic side of the membrane; that stretch reads DLLATDFNNPKLQINTKLQ. The chain crosses the membrane as a helical span at residues 344 to 364; that stretch reads LMAYLALFLGAGLMSMLAIWA.

This sequence belongs to the ZIP transporter (TC 2.A.5) family. As to expression, expressed in vascular bundles of stems.

The protein resides in the cell membrane. In terms of biological role, zinc transporter that may mediate zinc uptake from the rhizosphere. Seems specific to zinc ions and may not transport other divalent cations. In Oryza sativa subsp. japonica (Rice), this protein is Zinc transporter 3 (ZIP3).